Reading from the N-terminus, the 152-residue chain is MSINIKAVTDDNRAAILDLHVSQNQLSYIESTKVCLEDAKECHYYKPVGLYYEGDLVGFAMYGLFPEYDEDNKNGRVWLDRFFIDERYQGKGLGKKMLKALIQHLAELYKCKRIYLSIFENNIHAIRLYQRFGFQFNGELDFNGEKVMVKEL.

The 150-residue stretch at I3 to L152 folds into the N-acetyltransferase domain. Residues F82–I84, Q89–K95, and N122–R131 each bind acetyl-CoA. Y129 acts as the Proton donor in catalysis.

It belongs to the acetyltransferase family.

It carries out the reaction an alkane-alpha,omega-diamine + acetyl-CoA = an N-acetylalkane-alpha,omega-diamine + CoA + H(+). The catalysed reaction is spermine + acetyl-CoA = N(1)-acetylspermine + CoA + H(+). The enzyme catalyses spermidine + acetyl-CoA = N(1)-acetylspermidine + CoA + H(+). It participates in amine and polyamine degradation; spermine degradation. It functions in the pathway amine and polyamine degradation; spermidine degradation. Its activity is regulated as follows. Putrescine and N(8)-acetylspermidine are competitive inhibitors of spermidine acetylation. Acetylates both spermidine and spermine at primary propyl amine moieties, with spermine being the preferred substrate. The chain is Spermine/spermidine N(1)-acetyltransferase (bltD) from Bacillus subtilis (strain 168).